The chain runs to 197 residues: RNA pyrophosphohydrolase (197 aa).

Residues 6 to 154 enclose the Nudix hydrolase domain; the sequence is GYRPNVGIVL…KREVYQLALS (149 aa). Positions 38-59 match the Nudix box motif; the sequence is GGIQHGESPEQAMYRELHEEVG.

This sequence belongs to the Nudix hydrolase family. RppH subfamily. A divalent metal cation is required as a cofactor.

Its function is as follows. Accelerates the degradation of transcripts by removing pyrophosphate from the 5'-end of triphosphorylated RNA, leading to a more labile monophosphorylated state that can stimulate subsequent ribonuclease cleavage. This chain is RNA pyrophosphohydrolase, found in Polynucleobacter necessarius subsp. necessarius (strain STIR1).